Consider the following 166-residue polypeptide: 3-isopropylmalate dehydratase small subunit (166 aa).

The protein belongs to the LeuD family. LeuD type 2 subfamily. As to quaternary structure, heterodimer of LeuC and LeuD.

It catalyses the reaction (2R,3S)-3-isopropylmalate = (2S)-2-isopropylmalate. The protein operates within amino-acid biosynthesis; L-leucine biosynthesis; L-leucine from 3-methyl-2-oxobutanoate: step 2/4. Functionally, catalyzes the isomerization between 2-isopropylmalate and 3-isopropylmalate, via the formation of 2-isopropylmaleate. This chain is 3-isopropylmalate dehydratase small subunit, found in Heliobacterium modesticaldum (strain ATCC 51547 / Ice1).